The sequence spans 120 residues: Large ribosomal subunit protein bL20 (120 aa).

This sequence belongs to the bacterial ribosomal protein bL20 family.

Its function is as follows. Binds directly to 23S ribosomal RNA and is necessary for the in vitro assembly process of the 50S ribosomal subunit. It is not involved in the protein synthesizing functions of that subunit. This Desulfitobacterium hafniense (strain DSM 10664 / DCB-2) protein is Large ribosomal subunit protein bL20.